Here is a 185-residue protein sequence, read N- to C-terminus: Ribosome-recycling factor (185 aa).

The protein belongs to the RRF family.

It is found in the cytoplasm. Functionally, responsible for the release of ribosomes from messenger RNA at the termination of protein biosynthesis. May increase the efficiency of translation by recycling ribosomes from one round of translation to another. This is Ribosome-recycling factor from Vibrio vulnificus (strain YJ016).